Reading from the N-terminus, the 211-residue chain is Uracil phosphoribosyltransferase (211 aa).

Residues R78, R103, and 130–138 (DPMLATGNS) contribute to the 5-phospho-alpha-D-ribose 1-diphosphate site. Uracil-binding positions include I193 and 198-200 (GDA). D199 lines the 5-phospho-alpha-D-ribose 1-diphosphate pocket.

It belongs to the UPRTase family. It depends on Mg(2+) as a cofactor.

The enzyme catalyses UMP + diphosphate = 5-phospho-alpha-D-ribose 1-diphosphate + uracil. The protein operates within pyrimidine metabolism; UMP biosynthesis via salvage pathway; UMP from uracil: step 1/1. Its activity is regulated as follows. Allosterically activated by GTP. Functionally, catalyzes the conversion of uracil and 5-phospho-alpha-D-ribose 1-diphosphate (PRPP) to UMP and diphosphate. This is Uracil phosphoribosyltransferase from Acinetobacter baumannii (strain ATCC 17978 / DSM 105126 / CIP 53.77 / LMG 1025 / NCDC KC755 / 5377).